The chain runs to 177 residues: MLSYGKPFNFQRWIDEHVHLLKPPVGNQQVWQDSDFIVTVVGGPNRRTDYHDDPLEEFFYQLRGNAYLNLWIDGKRERVELKEGDVFLLPPHVRHSPQRPESGSACLVIERQRPEGTVDGFEWYCDACGERVHRVELQLKSIVNDLPPLFDAFYESEEKRRCPRCGVVHPGKQGRTD.

Residue Arg47 participates in O2 binding. His51, Glu57, and His95 together coordinate Fe cation. Glu57 contributes to the substrate binding site. Substrate-binding residues include Arg99 and Glu110. Residues Cys125, Cys128, Cys162, and Cys165 each coordinate Fe cation.

This sequence belongs to the 3-HAO family. Homodimer. Requires Fe(2+) as cofactor.

It catalyses the reaction 3-hydroxyanthranilate + O2 = (2Z,4Z)-2-amino-3-carboxymuconate 6-semialdehyde. It participates in cofactor biosynthesis; NAD(+) biosynthesis; quinolinate from L-kynurenine: step 3/3. Catalyzes the oxidative ring opening of 3-hydroxyanthranilate to 2-amino-3-carboxymuconate semialdehyde, which spontaneously cyclizes to quinolinate. This is 3-hydroxyanthranilate 3,4-dioxygenase from Burkholderia cenocepacia (strain ATCC BAA-245 / DSM 16553 / LMG 16656 / NCTC 13227 / J2315 / CF5610) (Burkholderia cepacia (strain J2315)).